Consider the following 277-residue polypeptide: Methyltransferase str3 (277 aa).

This sequence belongs to the methyltransferase superfamily. LaeA methyltransferase family.

It functions in the pathway mycotoxin biosynthesis. Its function is as follows. Methyltransferase; part of the gene cluster that mediates the biosynthesis of strobilurin A, an antifungal polyketide that contains a key beta-methoxyacrylate toxophore that targets the complex III of the mitochondrial electron transport chain. Strobilurin biosynthesis begins with construction of benzoyl CoA by step-wise elimination of ammonia from phenylalanine by the phenylalanine ammonia-lyase str11, oxygenation by str8 and retro-Claisen reaction to form benzoic acid, which is activated to its CoA thiolester benzoyl CoA by the dedicated CoA ligase str10. Benzoyl CoA forms the starter unit for the highly reducing polyketide synthase stpks1 that produces the polyketide prestrobilutin A. The FAD-dependent oxygenase str9 then catalyzes the key oxidative rearrangement responsible for the creation of the beta-methoxyacrylate toxophore. Str9 performs epoxidation of the 2,3 olefin of prestrobilutin A, followed by Meinwald rearrangement to furnish the aldehyde intermediate. Rapid enolization of the aldehyde intermediate would give the beta-methoxyacrylate skeleton and methylations catalyzed by str2 and str3 complete the synthesis and lead to the production of strobilurin A. The short-chain dehydrogenase stl2 and the dehydrogenase str4 play a role in the shunt pathway leading to the production of bolineol. The cluster encodes no obvious halogenase gene that could be involved in production of strobilurin B, nor any obvious dimethylallyl-transferase that could be involved in the production of strobilurin G. It is possible that unknown proteins encoded in, or near, the cluster (such as str1 or stl1) may form new classes of halogenases or dimethylally-transferases, or that the responsible genes are located elsewhere on the genome. Similarly, proteins encoded by str5/str6 hydrolases appear to have no chemical role in the biosynthesis of strobilurin A. Finally, no obvious self-resistance gene is found within the cluster. This is Methyltransferase str3 from Strobilurus tenacellus.